We begin with the raw amino-acid sequence, 1069 residues long: Carbamoyl phosphate synthase large chain (1069 aa).

The carboxyphosphate synthetic domain stretch occupies residues Met1 to Glu401. Arg129, Arg169, Gly175, Gly176, Lys208, Val210, Glu215, Gly241, Ile242, His243, Gln284, and Glu298 together coordinate ATP. An ATP-grasp 1 domain is found at Arg133 to Leu327. Gln284, Glu298, and Asn300 together coordinate Mg(2+). Gln284, Glu298, and Asn300 together coordinate Mn(2+). Positions Ile402–Val549 are oligomerization domain. The interval Glu550–Asn932 is carbamoyl phosphate synthetic domain. In terms of domain architecture, ATP-grasp 2 spans Asp674–Leu864. Residues Arg710, Lys749, Leu751, Glu755, Gly780, Val781, His782, Ser783, Gln823, and Glu835 each contribute to the ATP site. Mg(2+)-binding residues include Gln823, Glu835, and Asn837. Mn(2+) contacts are provided by Gln823, Glu835, and Asn837. Positions Asn932–Lys1069 constitute an MGS-like domain. The allosteric domain stretch occupies residues Met933–Lys1069.

It belongs to the CarB family. In terms of assembly, composed of two chains; the small (or glutamine) chain promotes the hydrolysis of glutamine to ammonia, which is used by the large (or ammonia) chain to synthesize carbamoyl phosphate. Tetramer of heterodimers (alpha,beta)4. Requires Mg(2+) as cofactor. It depends on Mn(2+) as a cofactor.

The catalysed reaction is hydrogencarbonate + L-glutamine + 2 ATP + H2O = carbamoyl phosphate + L-glutamate + 2 ADP + phosphate + 2 H(+). It catalyses the reaction hydrogencarbonate + NH4(+) + 2 ATP = carbamoyl phosphate + 2 ADP + phosphate + 2 H(+). The protein operates within amino-acid biosynthesis; L-arginine biosynthesis; carbamoyl phosphate from bicarbonate: step 1/1. It functions in the pathway pyrimidine metabolism; UMP biosynthesis via de novo pathway; (S)-dihydroorotate from bicarbonate: step 1/3. Its function is as follows. Large subunit of the glutamine-dependent carbamoyl phosphate synthetase (CPSase). CPSase catalyzes the formation of carbamoyl phosphate from the ammonia moiety of glutamine, carbonate, and phosphate donated by ATP, constituting the first step of 2 biosynthetic pathways, one leading to arginine and/or urea and the other to pyrimidine nucleotides. The large subunit (synthetase) binds the substrates ammonia (free or transferred from glutamine from the small subunit), hydrogencarbonate and ATP and carries out an ATP-coupled ligase reaction, activating hydrogencarbonate by forming carboxy phosphate which reacts with ammonia to form carbamoyl phosphate. The chain is Carbamoyl phosphate synthase large chain from Clostridium botulinum (strain Alaska E43 / Type E3).